The primary structure comprises 113 residues: Replication initiation control protein YabA (113 aa).

4 residues coordinate Zn(2+): H86, C88, C102, and C105.

The protein belongs to the YabA family. Homotetramer. Interacts with both DnaA and DnaN, acting as a bridge between these two proteins. Zn(2+) is required as a cofactor.

It is found in the cytoplasm. Its subcellular location is the nucleoid. Functionally, involved in control of chromosome replication initiation. Inhibits the cooperative binding of DnaA to the oriC region, thus negatively regulating initiation of chromosome replication. Inhibits the ability of DnaA-ATP to form a helix on DNA; does not disassemble preformed DnaA-DNA helices. Decreases the residence time of DnaA on the chromosome at its binding sites (oriC, replication forks and promoter-binding sites). Tethers DnaA to the replication machinery via the DNA polymerase beta sliding clamp subunit (dnaN). Associates with oriC and other DnaA targets on the chromosome in a DnaA-dependent manner. This chain is Replication initiation control protein YabA, found in Pediococcus pentosaceus (strain ATCC 25745 / CCUG 21536 / LMG 10740 / 183-1w).